The following is a 767-amino-acid chain: 5-methyltetrahydropteroyltriglutamate--homocysteine methyltransferase (767 aa).

5-methyltetrahydropteroyltri-L-glutamate-binding positions include 17-20 (RELK) and K117. Residues 441 to 443 (IGS) and E494 contribute to the L-homocysteine site. L-methionine is bound by residues 441-443 (IGS) and E494. 5-methyltetrahydropteroyltri-L-glutamate contacts are provided by residues 525–526 (RC) and W571. L-homocysteine is bound at residue D609. Residue D609 participates in L-methionine binding. E615 lines the 5-methyltetrahydropteroyltri-L-glutamate pocket. Zn(2+)-binding residues include H652, C654, and E676. The active-site Proton donor is the H705. C737 provides a ligand contact to Zn(2+).

Belongs to the vitamin-B12 independent methionine synthase family. It depends on Zn(2+) as a cofactor.

It carries out the reaction 5-methyltetrahydropteroyltri-L-glutamate + L-homocysteine = tetrahydropteroyltri-L-glutamate + L-methionine. Its pathway is amino-acid biosynthesis; L-methionine biosynthesis via de novo pathway; L-methionine from L-homocysteine (MetE route): step 1/1. Functionally, catalyzes the transfer of a methyl group from 5-methyltetrahydrofolate to homocysteine resulting in methionine formation. This chain is 5-methyltetrahydropteroyltriglutamate--homocysteine methyltransferase, found in Bifidobacterium longum subsp. infantis (strain ATCC 15697 / DSM 20088 / JCM 1222 / NCTC 11817 / S12).